We begin with the raw amino-acid sequence, 57 residues long: uncharacterized protein (57 aa).

Functionally, proetin of unknown function whose overexpression causes growth inhibition. Overexpression increases the expression of ergosterol synthesis genes. This is an uncharacterized protein from Saccharomyces cerevisiae (strain ATCC 204508 / S288c) (Baker's yeast).